A 1830-amino-acid polypeptide reads, in one-letter code: MSVDTLGWSAQDWIDFHGKSTPEHSYNTLLSLLKSQKSAPEDPAWISLINEANLAHQWKVLQSKANKQQLPLYGVPIAVKDNIDSKGSPTTAACPAFEYNPSADSTVVALLKDAGAIVIGKTNLDQFATGLVGTRSPYGKTPCVFSDKHVSGGSSAGSASAVGRGIVPIALGTDTAGSGRVPAALNNLIGLKPTKGLFSCSGVVPACKSLDCVSVFAMNLSDAERCFKVMAKPDLENDEYSRPLPSNPLQKYPKNVTIAIPKEVPWYGETENPKLYAKAIENLKVAGASIVTIDFEPLLALARCLYEGAWVAERYEATKDFFATNPPESSLDPTVTSIIKTATKYDAADSFRYEYQRQGILQKVDQTLKDIDVLCVPTCPLNPTFEEVAAEPVLVNSRQGTWTNFVNLADMAALAVPAGFRPDGLPQGVTLIGKKFTDFALLELANRYFKVAFPQGSRTFGKFIDRQVTTKDDELRGPDISPEDSVKLAVVGAHLKGLPLYWQLEKVNATYLGSPKTSKNYKLYALPKTGPILKPGLRRVGEETGSQIQLEVYSVPKENFGEFISMVPEPLGIGSVELESGEWVKSFICEEFGYTQKGTVDITKYGGFKKYIDFLKQEEAKVKKPFETVLIANRGEIAVRIIKTLKKLNIRSVAVYSDPDKYSQHVIDADLGVALNGRTAAETYLDIDKIIKAAKDTNAQAIIPGYGFLSENAEFADKCVEEGIVFVGPSGEAIRKLGLKHSAREIAEKAGVPLVPGSGLVTSAKEAKEIANKLEYPVMVKSTAGGGGIGLQKVDSENEIERVFETVQHQGKAYFGDSGVFLERFVENARHVEIQMMGDGYGKAIAIGERDCSLQRRNQKIIEETPAPNLGETTRTKMRQAAESLGSLLKYKCAGTVEFIYDERRDEFYFLEVNARLQVEHPITEMVTGLDLVEWMLRIAADDAPDFESANIVVTGASIEARLYAENPAKDFRPSPGLLTDVHFPEWARVDTWVSKGTTVSAEYDPTLAKIIVHGKDRNDAIMKMNKALNETVVYGCITNIDYLRSIASSEMFKTAKVATKILDSYDYKPCAFEVTSPGAYTTVQDYPGRVGYWRIGVPPSGPMDAYSFRLANRIVGNHYKAPAIELTLNGPKILFHTETIIAISGGIAACSLNDKPIEQNKPIQVNRGDHLAIGKLSVGCRAYLAIRGGIDVPEYLGSRSTFALGNMGGYNGRVLKLGDVLFLNQPELASSSLPGPAYEPQAPPANLLPKISDDKEWTIGVTCGPHGSPDFFKPESVEEFFSEKWKVHYNSNRFGVRLIGPKPKWARKDGGEGGLHPSNAHDYVYSLGAINFTGDEPVIITSDGPSLGGFVCQAVVPEAELWKVGQVKPGDSIQFVPISYQVARQLKESQDAAIETLEDGKLQTLTSDLILPTYEDPVLVQLPKKSNLSPKVTYRQAGDRYILVEYGENQMDLNIAYRINQLINLVGKHKTVGIVEMSQGVRSVLIEYDGYKISQGALLDTLVAYESEIQFDKNWSIKSKIFKLPLAFEDSKTLECVTRYQETIRSKAPWLPNNVDFVAEVNDITHKDVENMLYSARFLVLGLGDVFLGAPCAVPLDPRHRFLGSKYNPSRTYTKNGVVGIGGMYMCIYAMDSPGGYQLVGRTIPIWDKLKLGSHSQEHPWLLTPFDQVEFYPVSEEELDRFTEDCENGKFPVQVEESVFDHKNYLKWINENIESITEFQKSQGGAKADEFARLIQVANQELESSTTNKSAVEEEYPEDAEMVYSEYSGRFWKPMVSAGDTVTKGDGLVIVEAMKTEMVVPAKKSGKVLKIVHKNGDMVDAGDLVAVIQ.

ATP is bound by residues 115–122, Lys-740, Glu-823, and Asn-858; that span reads GAIVIGKT. The region spanning 625–1068 is the Biotin carboxylation domain; that stretch reads PFETVLIANR…ATKILDSYDY (444 aa). Positions 744–941 constitute an ATP-grasp domain; it reads REIAEKAGVP…LVEWMLRIAA (198 aa). The region spanning 1752 to 1830 is the Biotinyl-binding domain; it reads AVEEEYPEDA…DAGDLVAVIQ (79 aa). N6-biotinyllysine is present on Lys-1796.

Belongs to the DUR1,2 family. In terms of assembly, monomer. The cofactor is biotin.

The catalysed reaction is urea + hydrogencarbonate + ATP = urea-1-carboxylate + ADP + phosphate + H(+). It carries out the reaction urea-1-carboxylate + H2O + 3 H(+) = 2 NH4(+) + 2 CO2. The protein operates within nitrogen metabolism; urea degradation; CO(2) and NH(3) from urea (allophanate route): step 1/2. Its pathway is nitrogen metabolism; urea degradation; CO(2) and NH(3) from urea (allophanate route): step 2/2. In terms of biological role, involved in uracil catabolism. Hydrolysis of urea to ammonia and CO(2). The sequence is that of Urea amidolyase (DUR1,2) from Lachancea kluyveri (Yeast).